A 130-amino-acid polypeptide reads, in one-letter code: Small ribosomal subunit protein uS11c (130 aa).

It belongs to the universal ribosomal protein uS11 family. Part of the 30S ribosomal subunit.

It is found in the plastid. Its subcellular location is the chloroplast. In Tetradesmus obliquus (Green alga), this protein is Small ribosomal subunit protein uS11c.